The following is a 405-amino-acid chain: Splicing factor 45 (405 aa).

At S2 the chain carries N-acetylserine. Phosphoserine is present on S2. Residue K15 forms a Glycyl lysine isopeptide (Lys-Gly) (interchain with G-Cter in SUMO2) linkage. K21 is subject to N6-acetyllysine. Glycyl lysine isopeptide (Lys-Gly) (interchain with G-Cter in SUMO2) cross-links involve residues K24 and K33. K41 is modified (N6-acetyllysine; alternate). K41 participates in a covalent cross-link: Glycyl lysine isopeptide (Lys-Gly) (interchain with G-Cter in SUMO2); alternate. Positions 57-68 (LKRGGSSDDRQI) are enriched in basic and acidic residues. Disordered regions lie at residues 57–88 (LKRG…SGFS) and 114–233 (RQRE…FLAN). K58 is covalently cross-linked (Glycyl lysine isopeptide (Lys-Gly) (interchain with G-Cter in SUMO2)). T71 bears the Phosphothreonine mark. Residues 114-153 (RQREERQRQRELERQKEIEEREKRRKDRHEASGFSRRPDP) show a composition bias toward basic and acidic residues. S155 and S169 each carry phosphoserine. Positions 182-200 (VEKDKELPRDFPYEEDSRP) are enriched in basic and acidic residues. S222 carries the post-translational modification Phosphoserine. Residues 235 to 283 (GGTVAHKIMQKYGFREGQGLGKHEQGLSTALSVEKTSKRGGKIIVGDAT) form the G-patch domain. Residue T237 is modified to Phosphothreonine. Residue K256 forms a Glycyl lysine isopeptide (Lys-Gly) (interchain with G-Cter in SUMO2) linkage. Residue S266 is modified to Phosphoserine. Residue K276 forms a Glycyl lysine isopeptide (Lys-Gly) (interchain with G-Cter in SUMO2) linkage. 2 positions are modified to phosphoserine: S295 and S297. Residues 310 to 389 (VVLLRNMVGA…YFGGRVVKAC (80 aa)) form the RRM domain.

Binds SXL. Associates with the spliceosome. Interacts with SF3B1, SF1 and U2AF2.

Its subcellular location is the nucleus. In terms of biological role, splice factor that binds to the single-stranded 3'AG at the exon/intron border and promotes its utilization in the second catalytic step. Involved in the regulation of alternative splicing and the utilization of cryptic splice sites. The protein is Splicing factor 45 (Rbm17) of Mus musculus (Mouse).